A 598-amino-acid polypeptide reads, in one-letter code: Dihydroxy-acid dehydratase astD, mitochondrial (598 aa).

The N-terminal 111 residues, 1 to 111 (MFASRIRSRA…HRAGLVPMRF (111 aa)), are a transit peptide targeting the mitochondrion. Positions 23-50 (RLPASTTGRRYKSDETLNRVSSKITQPK) are disordered. Positions 40–50 (NRVSSKITQPK) are enriched in polar residues. C86 provides a ligand contact to [2Fe-2S] cluster. D118 lines the Mg(2+) pocket. A [2Fe-2S] cluster-binding site is contributed by C159. D160 provides a ligand contact to Mg(2+). Residue C232 coordinates [2Fe-2S] cluster. E485 provides a ligand contact to Mg(2+). S511 (proton acceptor) is an active-site residue.

Belongs to the IlvD/Edd family. Requires [2Fe-2S] cluster as cofactor. The cofactor is Mg(2+).

Its subcellular location is the mitochondrion. The catalysed reaction is (2R)-2,3-dihydroxy-3-methylbutanoate = 3-methyl-2-oxobutanoate + H2O. It catalyses the reaction (2R,3R)-2,3-dihydroxy-3-methylpentanoate = (S)-3-methyl-2-oxopentanoate + H2O. The protein operates within amino-acid biosynthesis; L-isoleucine biosynthesis; L-isoleucine from 2-oxobutanoate: step 3/4. It functions in the pathway amino-acid biosynthesis; L-valine biosynthesis; L-valine from pyruvate: step 3/4. Its activity is regulated as follows. DHAD activity is not inhibited by the dihydroxyacid dehydratase inhibitor aspterric acid (AA). Dihydroxyacid dehydratase; part of the gene cluster that mediates the biosynthesis of the sesquiterpenoid aspterric acid (AA), an inhibitor of dihydroxy-acid dehydratase (DHAD) effective as an herbicide. Performs the third step in the common pathway leading to biosynthesis of branched-chain amino acids. Catalyzes the dehydration of (2R,3R)-2,3-dihydroxy-3-methylpentanoate (2,3-dihydroxy-3-methylvalerate) into 2-oxo-3-methylpentanoate (2-oxo-3-methylvalerate) and of (2R)-2,3-dihydroxy-3-methylbutanoate (2,3-dihydroxyisovalerate) into 2-oxo-3-methylbutanoate (2-oxoisovalerate), the penultimate precursor to L-isoleucine and L-valine, respectively. AstD confers self-resistance in the presence of the dihydroxyacid dehydratase inhibitor aspterric acid (AA) produced by the ast cluster. This chain is Dihydroxy-acid dehydratase astD, mitochondrial, found in Aspergillus terreus (strain NIH 2624 / FGSC A1156).